Consider the following 269-residue polypeptide: 2-dehydro-3-deoxyphosphooctonate aldolase (269 aa).

Belongs to the KdsA family.

It is found in the cytoplasm. It catalyses the reaction D-arabinose 5-phosphate + phosphoenolpyruvate + H2O = 3-deoxy-alpha-D-manno-2-octulosonate-8-phosphate + phosphate. The protein operates within carbohydrate biosynthesis; 3-deoxy-D-manno-octulosonate biosynthesis; 3-deoxy-D-manno-octulosonate from D-ribulose 5-phosphate: step 2/3. It participates in bacterial outer membrane biogenesis; lipopolysaccharide biosynthesis. The protein is 2-dehydro-3-deoxyphosphooctonate aldolase of Chlamydia trachomatis serovar L2 (strain ATCC VR-902B / DSM 19102 / 434/Bu).